A 211-amino-acid polypeptide reads, in one-letter code: SsrA-binding protein (211 aa).

The disordered stretch occupies residues 168–211 (KHRLRRPRAQRNTQRSVTPRRTRENKNVRGSKARSARRNVRREN). The span at 177-186 (QRNTQRSVTP) shows a compositional bias: polar residues. The segment covering 196–211 (RGSKARSARRNVRREN) has biased composition (basic residues).

It belongs to the SmpB family.

The protein localises to the cytoplasm. Functionally, required for rescue of stalled ribosomes mediated by trans-translation. Binds to transfer-messenger RNA (tmRNA), required for stable association of tmRNA with ribosomes. tmRNA and SmpB together mimic tRNA shape, replacing the anticodon stem-loop with SmpB. tmRNA is encoded by the ssrA gene; the 2 termini fold to resemble tRNA(Ala) and it encodes a 'tag peptide', a short internal open reading frame. During trans-translation Ala-aminoacylated tmRNA acts like a tRNA, entering the A-site of stalled ribosomes, displacing the stalled mRNA. The ribosome then switches to translate the ORF on the tmRNA; the nascent peptide is terminated with the 'tag peptide' encoded by the tmRNA and targeted for degradation. The ribosome is freed to recommence translation, which seems to be the essential function of trans-translation. This chain is SsrA-binding protein, found in Tropheryma whipplei (strain Twist) (Whipple's bacillus).